The chain runs to 383 residues: Acetylornithine deacetylase (383 aa).

Histidine 80 contacts Zn(2+). Aspartate 82 is an active-site residue. A Zn(2+)-binding site is contributed by aspartate 112. Residue glutamate 144 is part of the active site. Zn(2+) contacts are provided by glutamate 145, glutamate 169, and histidine 355.

This sequence belongs to the peptidase M20A family. ArgE subfamily. In terms of assembly, homodimer. It depends on Zn(2+) as a cofactor. Co(2+) is required as a cofactor. The cofactor is glutathione.

It localises to the cytoplasm. It catalyses the reaction N(2)-acetyl-L-ornithine + H2O = L-ornithine + acetate. It participates in amino-acid biosynthesis; L-arginine biosynthesis; L-ornithine from N(2)-acetyl-L-ornithine (linear): step 1/1. Functionally, catalyzes the hydrolysis of the amide bond of N(2)-acetylated L-amino acids. Cleaves the acetyl group from N-acetyl-L-ornithine to form L-ornithine, an intermediate in L-arginine biosynthesis pathway, and a branchpoint in the synthesis of polyamines. This is Acetylornithine deacetylase from Escherichia coli O127:H6 (strain E2348/69 / EPEC).